Here is a 341-residue protein sequence, read N- to C-terminus: Anthranilate phosphoribosyltransferase (341 aa).

5-phospho-alpha-D-ribose 1-diphosphate-binding positions include Gly81, 84 to 85 (GD), 91 to 94 (NVST), 109 to 117 (KHGNRSVSS), and Ser121. Gly81 serves as a coordination point for anthranilate. Ser93 is a Mg(2+) binding site. Asn112 lines the anthranilate pocket. Arg167 is an anthranilate binding site. Positions 226 and 227 each coordinate Mg(2+).

This sequence belongs to the anthranilate phosphoribosyltransferase family. In terms of assembly, homodimer. Mg(2+) is required as a cofactor.

It catalyses the reaction N-(5-phospho-beta-D-ribosyl)anthranilate + diphosphate = 5-phospho-alpha-D-ribose 1-diphosphate + anthranilate. The protein operates within amino-acid biosynthesis; L-tryptophan biosynthesis; L-tryptophan from chorismate: step 2/5. Functionally, catalyzes the transfer of the phosphoribosyl group of 5-phosphorylribose-1-pyrophosphate (PRPP) to anthranilate to yield N-(5'-phosphoribosyl)-anthranilate (PRA). The protein is Anthranilate phosphoribosyltransferase of Teredinibacter turnerae (strain ATCC 39867 / T7901).